We begin with the raw amino-acid sequence, 210 residues long: Beta-crystallin A4 (210 aa).

Positions 1-25 are N-terminal arm; it reads MSGMFSGSISETSGMSLQCTKSAGH. Beta/gamma crystallin 'Greek key' domains are found at residues 26-65 and 66-112; these read WKIV…KVLS and GAWV…RPVA. Residues 113–118 form a connecting peptide region; it reads CANHRD. Beta/gamma crystallin 'Greek key' domains follow at residues 119-160 and 161-209; these read SRLT…HVHS and GAWV…RRIQ.

The protein belongs to the beta/gamma-crystallin family. As to quaternary structure, homo/heterodimer, or complexes of higher-order. The structure of beta-crystallin oligomers seems to be stabilized through interactions between the N-terminal arms.

Functionally, crystallins are the dominant structural components of the vertebrate eye lens. This chain is Beta-crystallin A4 (CRYBA4), found in Bos taurus (Bovine).